We begin with the raw amino-acid sequence, 176 residues long: CASP-like protein 5A1 (176 aa).

At 1–35 (MNPSHPAVHPVEAPPTDVHHAPRVRMKDYQGMPGT) the chain is on the cytoplasmic side. Residues 36–56 (LGGLALRLGQFCFAVVAFSIM) form a helical membrane-spanning segment. At 57 to 67 (LSTDDFSTVTA) the chain is on the extracellular side. A helical transmembrane segment spans residues 68-88 (FCYLVAATVLQCLWSLALAVI). Topologically, residues 89-102 (DGYALLVKRSLRNS) are cytoplasmic. A helical transmembrane segment spans residues 103–123 (LVVSLFVVGDGVTATLTFAAA). Residues 124-152 (CASAGITVLIGNDLRECDQNHCGKYETAT) are Extracellular-facing. A helical transmembrane segment spans residues 153–173 (AMAFLSWFMVSPSFLLTFWLL). Topologically, residues 174–176 (ASR) are cytoplasmic.

It belongs to the Casparian strip membrane proteins (CASP) family. In terms of assembly, homodimer and heterodimers.

The protein localises to the cell membrane. In Ginkgo biloba (Ginkgo), this protein is CASP-like protein 5A1.